Consider the following 263-residue polypeptide: Hydroxyethylthiazole kinase (263 aa).

M41 is a substrate binding site. ATP contacts are provided by R117 and S163. G190 is a substrate binding site.

It belongs to the Thz kinase family. It depends on Mg(2+) as a cofactor.

It carries out the reaction 5-(2-hydroxyethyl)-4-methylthiazole + ATP = 4-methyl-5-(2-phosphooxyethyl)-thiazole + ADP + H(+). The protein operates within cofactor biosynthesis; thiamine diphosphate biosynthesis; 4-methyl-5-(2-phosphoethyl)-thiazole from 5-(2-hydroxyethyl)-4-methylthiazole: step 1/1. Functionally, catalyzes the phosphorylation of the hydroxyl group of 4-methyl-5-beta-hydroxyethylthiazole (THZ). This is Hydroxyethylthiazole kinase from Lactiplantibacillus plantarum (strain ATCC BAA-793 / NCIMB 8826 / WCFS1) (Lactobacillus plantarum).